Reading from the N-terminus, the 409-residue chain is Arginine deiminase (409 aa).

Residue Cys-399 is the Amidino-cysteine intermediate of the active site.

Belongs to the arginine deiminase family.

Its subcellular location is the cytoplasm. The enzyme catalyses L-arginine + H2O = L-citrulline + NH4(+). The protein operates within amino-acid degradation; L-arginine degradation via ADI pathway; carbamoyl phosphate from L-arginine: step 1/2. This chain is Arginine deiminase, found in Borrelia recurrentis (strain A1).